Here is a 446-residue protein sequence, read N- to C-terminus: NADH oxidase (446 aa).

FAD is bound by residues 7 to 11, D32, C42, V79, 109 to 112, K131, and Y158; these read GTNHA and ATGS. H10 serves as the catalytic Proton acceptor. The Redox-active role is filled by C42. C42 is subject to Cysteine sulfinic acid (-SO2H). I159, D178, Y187, and G244 together coordinate NAD(+). Residue D282 participates in FAD binding. A298 contacts NAD(+). Residues L299, A300, and S301 each coordinate FAD. Residue G329 participates in NAD(+) binding. FAD is bound at residue F427.

This sequence belongs to the class-III pyridine nucleotide-disulfide oxidoreductase family. As to quaternary structure, homodimer. The cofactor is FAD.

It catalyses the reaction 2 NADH + O2 + 2 H(+) = 2 NAD(+) + 2 H2O. With respect to regulation, inhibited by hydrogen peroxide, sulfhydryl reagents and quinine, but not by EDTA. Functionally, catalyzes the four-electron reduction of molecular oxygen to water. Active on beta-NADH, but not on alpha-NADH, beta-NADPH or alpha-NADPH. Under aerobic conditions, oxygen acts as the electron acceptor. Under anaerobic conditions, DCIP and MB can replace oxygen as the electron acceptor. The protein is NADH oxidase of Lactococcus lactis subsp. cremoris (strain MG1363).